Reading from the N-terminus, the 1111-residue chain is Protein NETWORKED 1C (1111 aa).

The NAB domain occupies 13 to 93 (YSWWWDSHNT…ERYNHATGVI (81 aa)). Coiled coils occupy residues 202–287 (SESE…KESS), 314–605 (ERAS…LISE), and 642–752 (KTIG…LESK). The interval 850-870 (TGGGRSMRKQDGGSGRMRKQS) is disordered. Residues 943-1009 (NREVNKRRVL…EGEEAIEKLF (67 aa)) are a coiled coil.

This sequence belongs to the NET family.

Plant-specific actin binding protein. May be part of a membrane-cytoskeletal adapter complex. In Arabidopsis thaliana (Mouse-ear cress), this protein is Protein NETWORKED 1C.